Reading from the N-terminus, the 688-residue chain is Envelope glycoprotein gp70 (688 aa).

The first 98 residues, 1–98, serve as a signal peptide directing secretion; sequence MPNHQSGSPT…SVLGPPPVSG (98 aa). At 99–624 the chain is on the extracellular side; the sequence is ESYWAYLPKP…ALNPLDWTQY (526 aa). N-linked (GlcNAc...) asparagine; by host glycosylation is found at N127 and N143. Residues 426 to 474 adopt a coiled-coil conformation; it reads LLPVDIGDEPWFDDSAIQTFRYATDLIRAKRFVAAIILGISALIAIITS. The propeptide occupies 455 to 456; the sequence is KR. Residues 457–477 form a fusion peptide region; sequence FVAAIILGISALIAIITSFAV. Residues 463–481 are immunosuppression; the sequence is LGISALIAIITSFAVATTA. Residue N498 is glycosylated (N-linked (GlcNAc...) asparagine; by host). A coiled-coil region spans residues 511–541; sequence LKLEARLNALEEVVLDLGQDVANLKTRMSTR. N557 carries an N-linked (GlcNAc...) asparagine; by host glycan. Residues 625–645 traverse the membrane as a helical segment; that stretch reads FIFIGVGALLLVIVLMIFPIV. Topologically, residues 646 to 688 are cytoplasmic; that stretch reads FQCLAKSLDQVQSDLNVLLLKKKKGGNAAPAAEMVELPRVSYT.

The mature envelope protein (Env) consists of a trimer of SU-TM heterodimers attached by non-covalent interactions or by a labile interchain disulfide bond. Specific enzymatic cleavages in vivo yield mature proteins. Envelope glycoproteins are synthesized as an inactive precursor that is N-glycosylated and processed likely by host cell furin or by a furin-like protease in the Golgi to yield the mature SU and TM proteins. The cleavage site between SU and TM requires the minimal sequence [KR]-X-[KR]-R.

Its subcellular location is the virion membrane. The protein resides in the host cell membrane. Its function is as follows. The surface protein (SU) attaches the virus to the host cell by binding to its receptor. This interaction triggers the refolding of the transmembrane protein (TM) and is thought to activate its fusogenic potential by unmasking its fusion peptide. Fusion occurs at the host cell plasma membrane. The transmembrane protein (TM) acts as a class I viral fusion protein. Under the current model, the protein has at least 3 conformational states: pre-fusion native state, pre-hairpin intermediate state, and post-fusion hairpin state. During viral and target cell membrane fusion, the coiled coil regions (heptad repeats) assume a trimer-of-hairpins structure, positioning the fusion peptide in close proximity to the C-terminal region of the ectodomain. The formation of this structure appears to drive apposition and subsequent fusion of viral and target cell membranes. Membranes fusion leads to delivery of the nucleocapsid into the cytoplasm. The protein is Envelope glycoprotein gp70 (env) of Mouse mammary tumor virus (strain C3H) (MMTV).